Consider the following 139-residue polypeptide: ATP synthase epsilon chain (139 aa).

It belongs to the ATPase epsilon chain family. As to quaternary structure, F-type ATPases have 2 components, CF(1) - the catalytic core - and CF(0) - the membrane proton channel. CF(1) has five subunits: alpha(3), beta(3), gamma(1), delta(1), epsilon(1). CF(0) has three main subunits: a, b and c.

The protein localises to the cell inner membrane. Functionally, produces ATP from ADP in the presence of a proton gradient across the membrane. In Pseudomonas putida (strain ATCC 47054 / DSM 6125 / CFBP 8728 / NCIMB 11950 / KT2440), this protein is ATP synthase epsilon chain.